Reading from the N-terminus, the 247-residue chain is Eukaryotic translation initiation factor 6 (247 aa).

Phosphoserine; by CK1 is present on residues Ser-174 and Ser-175.

Belongs to the eIF-6 family. In terms of assembly, monomer. Associates with the 60S ribosomal subunit. In terms of processing, phosphorylation at Ser-174 and Ser-175 promotes nuclear export.

Its subcellular location is the cytoplasm. It is found in the nucleus. The protein localises to the nucleolus. Binds to the 60S ribosomal subunit and prevents its association with the 40S ribosomal subunit to form the 80S initiation complex in the cytoplasm. Is also involved in ribosome biogenesis. Associates with pre-60S subunits in the nucleus and is involved in its nuclear export. This chain is Eukaryotic translation initiation factor 6 (tif6), found in Emericella nidulans (strain FGSC A4 / ATCC 38163 / CBS 112.46 / NRRL 194 / M139) (Aspergillus nidulans).